Here is a 715-residue protein sequence, read N- to C-terminus: Fatty acid oxidation complex subunit alpha (715 aa).

The enoyl-CoA hydratase/isomerase stretch occupies residues 1–190; the sequence is MIYEGKAITV…KVGAVDAVVA (190 aa). Aspartate 297 is a substrate binding site. A 3-hydroxyacyl-CoA dehydrogenase region spans residues 312–715; that stretch reads HDVKQAAVLG…MAKNGQRFFN (404 aa). NAD(+)-binding positions include methionine 325, aspartate 344, 401-403, lysine 408, and serine 430; that span reads VVE. Histidine 451 serves as the catalytic For 3-hydroxyacyl-CoA dehydrogenase activity. Asparagine 454 lines the NAD(+) pocket. The substrate site is built by asparagine 501 and tyrosine 660.

This sequence in the N-terminal section; belongs to the enoyl-CoA hydratase/isomerase family. It in the C-terminal section; belongs to the 3-hydroxyacyl-CoA dehydrogenase family. Heterotetramer of two alpha chains (FadB) and two beta chains (FadA).

It carries out the reaction a (3S)-3-hydroxyacyl-CoA + NAD(+) = a 3-oxoacyl-CoA + NADH + H(+). It catalyses the reaction a (3S)-3-hydroxyacyl-CoA = a (2E)-enoyl-CoA + H2O. The enzyme catalyses a 4-saturated-(3S)-3-hydroxyacyl-CoA = a (3E)-enoyl-CoA + H2O. The catalysed reaction is (3S)-3-hydroxybutanoyl-CoA = (3R)-3-hydroxybutanoyl-CoA. It carries out the reaction a (3Z)-enoyl-CoA = a 4-saturated (2E)-enoyl-CoA. It catalyses the reaction a (3E)-enoyl-CoA = a 4-saturated (2E)-enoyl-CoA. Its pathway is lipid metabolism; fatty acid beta-oxidation. Its function is as follows. Involved in the aerobic and anaerobic degradation of long-chain fatty acids via beta-oxidation cycle. Catalyzes the formation of 3-oxoacyl-CoA from enoyl-CoA via L-3-hydroxyacyl-CoA. It can also use D-3-hydroxyacyl-CoA and cis-3-enoyl-CoA as substrate. The polypeptide is Fatty acid oxidation complex subunit alpha (Pseudomonas putida (Arthrobacter siderocapsulatus)).